The chain runs to 337 residues: DNA-directed RNA polymerase subunit alpha (337 aa).

The tract at residues 1–233 is alpha N-terminal domain (alpha-NTD); it reads MVREKVKVST…NLFIPFLHVE (233 aa). An alpha C-terminal domain (alpha-CTD) region spans residues 267–337; that stretch reads LAFQYIFIDQ…IEKAFQKKID (71 aa).

It belongs to the RNA polymerase alpha chain family. In terms of assembly, in plastids the minimal PEP RNA polymerase catalytic core is composed of four subunits: alpha, beta, beta', and beta''. When a (nuclear-encoded) sigma factor is associated with the core the holoenzyme is formed, which can initiate transcription.

The protein localises to the plastid. The protein resides in the chloroplast. The enzyme catalyses RNA(n) + a ribonucleoside 5'-triphosphate = RNA(n+1) + diphosphate. Its function is as follows. DNA-dependent RNA polymerase catalyzes the transcription of DNA into RNA using the four ribonucleoside triphosphates as substrates. The protein is DNA-directed RNA polymerase subunit alpha of Arabis hirsuta (Hairy rock-cress).